Reading from the N-terminus, the 318-residue chain is Protein RecA (318 aa).

53–60 (GPESSGKT) contacts ATP.

It belongs to the RecA family.

The protein resides in the cytoplasm. In terms of biological role, can catalyze the hydrolysis of ATP in the presence of single-stranded DNA, the ATP-dependent uptake of single-stranded DNA by duplex DNA, and the ATP-dependent hybridization of homologous single-stranded DNAs. It interacts with LexA causing its activation and leading to its autocatalytic cleavage. The polypeptide is Protein RecA (Bacteroides fragilis (strain YCH46)).